A 256-amino-acid chain; its full sequence is MSVAIRVIPCLDVDAGRVVKGVNFADLRDAGDPVELARRYDGAGADELTFLDVTATSGNRETTFEMVARAAEEVFIPLTVGGGVREVADVDRLLRAGADKASINSAAVARPEVIDEITRHFGSQVLVLSLDARRVADGSTPSGFEVTTHGGRRGTGIDAVLWAREAADRGVGEILLNSIDADGTKAGFDLEMIRAVRAAVRVPLIASGGAGKPEDFPPAVQAGADAVLAASIFHFGPVDAIAQVKAAIRAAGFPVR.

Active-site residues include D12 and D131.

This sequence belongs to the HisA/HisF family. In terms of assembly, heterodimer of HisH and HisF.

It is found in the cytoplasm. It carries out the reaction 5-[(5-phospho-1-deoxy-D-ribulos-1-ylimino)methylamino]-1-(5-phospho-beta-D-ribosyl)imidazole-4-carboxamide + L-glutamine = D-erythro-1-(imidazol-4-yl)glycerol 3-phosphate + 5-amino-1-(5-phospho-beta-D-ribosyl)imidazole-4-carboxamide + L-glutamate + H(+). It participates in amino-acid biosynthesis; L-histidine biosynthesis; L-histidine from 5-phospho-alpha-D-ribose 1-diphosphate: step 5/9. Its function is as follows. IGPS catalyzes the conversion of PRFAR and glutamine to IGP, AICAR and glutamate. The HisF subunit catalyzes the cyclization activity that produces IGP and AICAR from PRFAR using the ammonia provided by the HisH subunit. The protein is Imidazole glycerol phosphate synthase subunit HisF of Renibacterium salmoninarum (strain ATCC 33209 / DSM 20767 / JCM 11484 / NBRC 15589 / NCIMB 2235).